The primary structure comprises 122 residues: Large ribosomal subunit protein uL14 (122 aa).

Belongs to the universal ribosomal protein uL14 family. As to quaternary structure, part of the 50S ribosomal subunit. Forms a cluster with proteins L3 and L19. In the 70S ribosome, L14 and L19 interact and together make contacts with the 16S rRNA in bridges B5 and B8.

In terms of biological role, binds to 23S rRNA. Forms part of two intersubunit bridges in the 70S ribosome. The protein is Large ribosomal subunit protein uL14 of Paracidovorax citrulli (strain AAC00-1) (Acidovorax citrulli).